The primary structure comprises 561 residues: Membrane protein insertase YidC (561 aa).

The next 6 helical transmembrane spans lie at 7-27 (ILIVALAIVSYVMVLKWNQDY), 342-362 (LELTVDYGFLWFIAQPIFWLL), 368-388 (LLGNWGWSIIVLTMLIKGLFF), 438-458 (LGGCLPILVQMPVFLALYWVL), 469-489 (WMLWITDLSIKDPFFILPIIM), and 516-536 (PIIFTFFFLWFPAGLVLYWVV).

This sequence belongs to the OXA1/ALB3/YidC family. Type 1 subfamily. In terms of assembly, interacts with the Sec translocase complex via SecD. Specifically interacts with transmembrane segments of nascent integral membrane proteins during membrane integration.

The protein resides in the cell inner membrane. Functionally, required for the insertion and/or proper folding and/or complex formation of integral membrane proteins into the membrane. Involved in integration of membrane proteins that insert both dependently and independently of the Sec translocase complex, as well as at least some lipoproteins. Aids folding of multispanning membrane proteins. This is Membrane protein insertase YidC from Pseudomonas entomophila (strain L48).